We begin with the raw amino-acid sequence, 399 residues long: Tryptophan synthase beta chain (399 aa).

Lys92 carries the N6-(pyridoxal phosphate)lysine modification.

The protein belongs to the TrpB family. As to quaternary structure, tetramer of two alpha and two beta chains. Requires pyridoxal 5'-phosphate as cofactor.

The catalysed reaction is (1S,2R)-1-C-(indol-3-yl)glycerol 3-phosphate + L-serine = D-glyceraldehyde 3-phosphate + L-tryptophan + H2O. The protein operates within amino-acid biosynthesis; L-tryptophan biosynthesis; L-tryptophan from chorismate: step 5/5. The beta subunit is responsible for the synthesis of L-tryptophan from indole and L-serine. In Legionella pneumophila subsp. pneumophila (strain Philadelphia 1 / ATCC 33152 / DSM 7513), this protein is Tryptophan synthase beta chain.